Consider the following 398-residue polypeptide: Arginine biosynthesis bifunctional protein ArgJ (398 aa).

Positions 148, 174, 185, 271, 393, and 398 each coordinate substrate. Threonine 185 functions as the Nucleophile in the catalytic mechanism.

The protein belongs to the ArgJ family. In terms of assembly, heterotetramer of two alpha and two beta chains.

Its subcellular location is the cytoplasm. It carries out the reaction N(2)-acetyl-L-ornithine + L-glutamate = N-acetyl-L-glutamate + L-ornithine. The catalysed reaction is L-glutamate + acetyl-CoA = N-acetyl-L-glutamate + CoA + H(+). It participates in amino-acid biosynthesis; L-arginine biosynthesis; L-ornithine and N-acetyl-L-glutamate from L-glutamate and N(2)-acetyl-L-ornithine (cyclic): step 1/1. Its pathway is amino-acid biosynthesis; L-arginine biosynthesis; N(2)-acetyl-L-ornithine from L-glutamate: step 1/4. In terms of biological role, catalyzes two activities which are involved in the cyclic version of arginine biosynthesis: the synthesis of N-acetylglutamate from glutamate and acetyl-CoA as the acetyl donor, and of ornithine by transacetylation between N(2)-acetylornithine and glutamate. In Listeria monocytogenes serovar 1/2a (strain ATCC BAA-679 / EGD-e), this protein is Arginine biosynthesis bifunctional protein ArgJ.